Consider the following 134-residue polypeptide: UPF0102 protein Rmet_3430 (134 aa).

Belongs to the UPF0102 family.

The chain is UPF0102 protein Rmet_3430 from Cupriavidus metallidurans (strain ATCC 43123 / DSM 2839 / NBRC 102507 / CH34) (Ralstonia metallidurans).